Reading from the N-terminus, the 576-residue chain is Homeobox protein invected (576 aa).

Disordered stretches follow at residues 1 to 68, 80 to 102, 305 to 344, 364 to 410, and 426 to 476; these read MSTL…DEQT, EVEE…NSVL, GGSV…LAQS, NSND…GEDS, and SDRP…RPRT. The span at 80–91 shows a compositional bias: acidic residues; the sequence is EVEEEHDLDLED. Composition is skewed to low complexity over residues 309-325, 364-381, and 395-405; these read SGSS…TNGN, NSND…TNTS, and AGAGATGASGK. The segment covering 450–468 has biased composition (gly residues); that stretch reads AGGGGGGVEKGEAADGGGV. The segment at residues 471–530 is a DNA-binding region (homeobox); sequence DKRPRTAFSGTQLARLKHEFNENRYLTEKRRQQLSGELGLNEAQIKIWFQNKRAKLKKSS.

The protein belongs to the engrailed homeobox family. As to expression, expressed in row 6/7 of the embryonic neuroectoderm.

The protein localises to the nucleus. Its function is as follows. Engrailed (en) and invected (inv) are functionally redundant transcription factors in neuronal precursor cell NB5-3 specification. Inv is unable to substitute for en in other regulatory processes such as maintaining gsb expression in the neuroectoderm after stage 10 of embryogenesis. Maintenance of gsb expression in row 5 of the neuroectoderm involves an as yet unidentified short range signaling molecule. This is Homeobox protein invected (inv) from Drosophila melanogaster (Fruit fly).